The primary structure comprises 506 residues: Maturase K (506 aa).

This sequence belongs to the intron maturase 2 family. MatK subfamily.

The protein localises to the plastid. It localises to the chloroplast. In terms of biological role, usually encoded in the trnK tRNA gene intron. Probably assists in splicing its own and other chloroplast group II introns. This is Maturase K from Trifolium spumosum (Mediterranean clover).